Consider the following 452-residue polypeptide: Probable pectate lyase 9 (452 aa).

The signal sequence occupies residues 1–25; the sequence is MATSSLKLTSACFVLLFIFVGCVLT. N-linked (GlcNAc...) asparagine glycosylation is found at asparagine 88, asparagine 139, asparagine 214, and asparagine 233. Ca(2+) is bound at residue aspartate 250. N-linked (GlcNAc...) asparagine glycosylation is present at asparagine 271. The Ca(2+) site is built by aspartate 274 and aspartate 278. N-linked (GlcNAc...) asparagine glycosylation is found at asparagine 281 and asparagine 305. Residue arginine 330 is part of the active site. Residue asparagine 374 is glycosylated (N-linked (GlcNAc...) asparagine).

Belongs to the polysaccharide lyase 1 family. It depends on Ca(2+) as a cofactor.

It catalyses the reaction Eliminative cleavage of (1-&gt;4)-alpha-D-galacturonan to give oligosaccharides with 4-deoxy-alpha-D-galact-4-enuronosyl groups at their non-reducing ends.. It participates in glycan metabolism; pectin degradation; 2-dehydro-3-deoxy-D-gluconate from pectin: step 2/5. The polypeptide is Probable pectate lyase 9 (Arabidopsis thaliana (Mouse-ear cress)).